A 368-amino-acid polypeptide reads, in one-letter code: Cobalt-precorrin-5B C(1)-methyltransferase (368 aa).

It belongs to the CbiD family.

It catalyses the reaction Co-precorrin-5B + S-adenosyl-L-methionine = Co-precorrin-6A + S-adenosyl-L-homocysteine. Its pathway is cofactor biosynthesis; adenosylcobalamin biosynthesis; cob(II)yrinate a,c-diamide from sirohydrochlorin (anaerobic route): step 6/10. In terms of biological role, catalyzes the methylation of C-1 in cobalt-precorrin-5B to form cobalt-precorrin-6A. This chain is Cobalt-precorrin-5B C(1)-methyltransferase, found in Brucella abortus (strain S19).